Here is a 226-residue protein sequence, read N- to C-terminus: ATP synthase F(0) complex subunit a (226 aa).

The next 6 membrane-spanning stretches (helical) occupy residues 13 to 33 (VILGIPLIAIAMLDPFTLISW), 69 to 89 (WALLLTSLMLLLMSLNLLGLL), 97 to 117 (TQLSLNMGLAVPLWLATVIMA), 138 to 158 (IPVLIIIETISLFIRPLALGV), 179 to 199 (FVLLSIMPTVAILTSIVLFLL), and 201 to 221 (LLEIAVAMIQAYVFVLLLSLY).

This sequence belongs to the ATPase A chain family. Component of the ATP synthase complex composed at least of ATP5F1A/subunit alpha, ATP5F1B/subunit beta, ATP5MC1/subunit c (homooctomer), MT-ATP6/subunit a, MT-ATP8/subunit 8, ATP5ME/subunit e, ATP5MF/subunit f, ATP5MG/subunit g, ATP5MK/subunit k, ATP5MJ/subunit j, ATP5F1C/subunit gamma, ATP5F1D/subunit delta, ATP5F1E/subunit epsilon, ATP5PF/subunit F6, ATP5PB/subunit b, ATP5PD/subunit d, ATP5PO/subunit OSCP. ATP synthase complex consists of a soluble F(1) head domain (subunits alpha(3) and beta(3)) - the catalytic core - and a membrane F(0) domain - the membrane proton channel (subunits c, a, 8, e, f, g, k and j). These two domains are linked by a central stalk (subunits gamma, delta, and epsilon) rotating inside the F1 region and a stationary peripheral stalk (subunits F6, b, d, and OSCP). Interacts with DNAJC30; interaction is direct.

It is found in the mitochondrion inner membrane. The catalysed reaction is H(+)(in) = H(+)(out). Functionally, subunit a, of the mitochondrial membrane ATP synthase complex (F(1)F(0) ATP synthase or Complex V) that produces ATP from ADP in the presence of a proton gradient across the membrane which is generated by electron transport complexes of the respiratory chain. ATP synthase complex consist of a soluble F(1) head domain - the catalytic core - and a membrane F(1) domain - the membrane proton channel. These two domains are linked by a central stalk rotating inside the F(1) region and a stationary peripheral stalk. During catalysis, ATP synthesis in the catalytic domain of F(1) is coupled via a rotary mechanism of the central stalk subunits to proton translocation. With the subunit c (ATP5MC1), forms the proton-conducting channel in the F(0) domain, that contains two crucial half-channels (inlet and outlet) that facilitate proton movement from the mitochondrial intermembrane space (IMS) into the matrix. Protons are taken up via the inlet half-channel and released through the outlet half-channel, following a Grotthuss mechanism. This Xenopus laevis (African clawed frog) protein is ATP synthase F(0) complex subunit a.